A 385-amino-acid chain; its full sequence is Arginine biosynthesis bifunctional protein ArgJ (385 aa).

6 residues coordinate substrate: Thr142, Lys168, Thr179, Glu259, Asn380, and Thr385. Residue Thr179 is the Nucleophile of the active site.

This sequence belongs to the ArgJ family. Heterotetramer of two alpha and two beta chains.

The protein localises to the cytoplasm. The catalysed reaction is N(2)-acetyl-L-ornithine + L-glutamate = N-acetyl-L-glutamate + L-ornithine. It carries out the reaction L-glutamate + acetyl-CoA = N-acetyl-L-glutamate + CoA + H(+). The protein operates within amino-acid biosynthesis; L-arginine biosynthesis; L-ornithine and N-acetyl-L-glutamate from L-glutamate and N(2)-acetyl-L-ornithine (cyclic): step 1/1. Its pathway is amino-acid biosynthesis; L-arginine biosynthesis; N(2)-acetyl-L-ornithine from L-glutamate: step 1/4. Functionally, catalyzes two activities which are involved in the cyclic version of arginine biosynthesis: the synthesis of N-acetylglutamate from glutamate and acetyl-CoA as the acetyl donor, and of ornithine by transacetylation between N(2)-acetylornithine and glutamate. The sequence is that of Arginine biosynthesis bifunctional protein ArgJ from Leptospira interrogans serogroup Icterohaemorrhagiae serovar copenhageni (strain Fiocruz L1-130).